The sequence spans 344 residues: tRNA N6-adenosine threonylcarbamoyltransferase (344 aa).

Positions 110 and 114 each coordinate Fe cation. Substrate-binding positions include 133–137 (VMSGA), D166, G179, and N278. Residue D303 participates in Fe cation binding.

Belongs to the KAE1 / TsaD family. Requires Fe(2+) as cofactor.

It localises to the cytoplasm. The catalysed reaction is L-threonylcarbamoyladenylate + adenosine(37) in tRNA = N(6)-L-threonylcarbamoyladenosine(37) in tRNA + AMP + H(+). Its function is as follows. Required for the formation of a threonylcarbamoyl group on adenosine at position 37 (t(6)A37) in tRNAs that read codons beginning with adenine. Is involved in the transfer of the threonylcarbamoyl moiety of threonylcarbamoyl-AMP (TC-AMP) to the N6 group of A37, together with TsaE and TsaB. TsaD likely plays a direct catalytic role in this reaction. The protein is tRNA N6-adenosine threonylcarbamoyltransferase of Chlamydia felis (strain Fe/C-56) (Chlamydophila felis).